Consider the following 154-residue polypeptide: Endoribonuclease YbeY (154 aa).

The Zn(2+) site is built by H113, H117, and H123.

This sequence belongs to the endoribonuclease YbeY family. Zn(2+) serves as cofactor.

The protein localises to the cytoplasm. In terms of biological role, single strand-specific metallo-endoribonuclease involved in late-stage 70S ribosome quality control and in maturation of the 3' terminus of the 16S rRNA. This chain is Endoribonuclease YbeY, found in Vibrio parahaemolyticus serotype O3:K6 (strain RIMD 2210633).